Here is a 219-residue protein sequence, read N- to C-terminus: UPF0173 metal-dependent hydrolase Mhun_1705 (219 aa).

It belongs to the UPF0173 family.

The chain is UPF0173 metal-dependent hydrolase Mhun_1705 from Methanospirillum hungatei JF-1 (strain ATCC 27890 / DSM 864 / NBRC 100397 / JF-1).